A 404-amino-acid chain; its full sequence is Cysteine desulfurase IscS (404 aa).

Pyridoxal 5'-phosphate-binding positions include 75 to 76 (AT), Asn-155, Gln-183, and 203 to 205 (SAH). Lys-206 carries the post-translational modification N6-(pyridoxal phosphate)lysine. Pyridoxal 5'-phosphate is bound at residue Thr-243. Cys-328 functions as the Cysteine persulfide intermediate in the catalytic mechanism. Cys-328 is a binding site for [2Fe-2S] cluster.

Belongs to the class-V pyridoxal-phosphate-dependent aminotransferase family. NifS/IscS subfamily. Homodimer. Forms a heterotetramer with IscU, interacts with other sulfur acceptors. Pyridoxal 5'-phosphate is required as a cofactor.

The protein resides in the cytoplasm. The enzyme catalyses (sulfur carrier)-H + L-cysteine = (sulfur carrier)-SH + L-alanine. Its pathway is cofactor biosynthesis; iron-sulfur cluster biosynthesis. Functionally, master enzyme that delivers sulfur to a number of partners involved in Fe-S cluster assembly, tRNA modification or cofactor biosynthesis. Catalyzes the removal of elemental sulfur atoms from cysteine to produce alanine. Functions as a sulfur delivery protein for Fe-S cluster synthesis onto IscU, an Fe-S scaffold assembly protein, as well as other S acceptor proteins. The sequence is that of Cysteine desulfurase IscS from Azotobacter vinelandii (strain DJ / ATCC BAA-1303).